The chain runs to 297 residues: HTH-type transcriptional regulator ArgP (297 aa).

The HTH lysR-type domain occupies 4–60 (PDYRTLQALDAVIRERGFERAAQKLCITQSAVSQRIKQLENMFGQPLLVRTVPPRPT). A DNA-binding region (H-T-H motif) is located at residues 21 to 40 (FERAAQKLCITQSAVSQRIK).

This sequence belongs to the LysR transcriptional regulatory family. As to quaternary structure, homodimer.

In terms of biological role, controls the transcription of genes involved in arginine and lysine metabolism. The polypeptide is HTH-type transcriptional regulator ArgP (Escherichia fergusonii (strain ATCC 35469 / DSM 13698 / CCUG 18766 / IAM 14443 / JCM 21226 / LMG 7866 / NBRC 102419 / NCTC 12128 / CDC 0568-73)).